The sequence spans 218 residues: Sodium channel regulatory subunit beta-1 (218 aa).

Positions 1–18 are cleaved as a signal peptide; sequence MGTLLAFVVGAALVSSAW. The Extracellular portion of the chain corresponds to 19-157; the sequence is GGCVEVDSET…DKANRDMASI (139 aa). Cystine bridges form between Cys-21-Cys-43 and Cys-40-Cys-121. The Ig-like C2-type domain occupies 22-150; that stretch reads VEVDSETEAV…KIHLEVVDKA (129 aa). N-linked (GlcNAc...) asparagine glycans are attached at residues Asn-93, Asn-110, Asn-114, and Asn-135. The chain crosses the membrane as a helical span at residues 158 to 179; the sequence is VSEIMMYVLIVVLTIWLVAEMV. The Cytoplasmic portion of the chain corresponds to 180 to 218; sequence YCYKKIAAATEAAAQENASEYLAITSESKENCTGVQVAE.

The protein belongs to the sodium channel auxiliary subunit SCN1B (TC 8.A.17) family. A voltage-gated sodium (Nav) channel consists of an ion-conducting pore-forming alpha subunit functional on its own that is regulated by one or more beta subunits. Interacts with SCN1A; regulatory subunit of SCN1A/Nav1.1. Interacts with SCN3A; regulatory subunit of SCN3A/Nav1.3. Interacts with SCN4A; regulatory subunit of SCN4A/Nav1.4. Interacts with SCN5A; regulatory subunit of SCN5A/Nav1.5. Interacts with SCN8A; regulatory subunit of SCN8A/Nav1.6. Interacts with SCN9A; regulatory subunit of SCN9A/Nav1.7. Interacts with SCN10A; regulatory subunit of SCN10A/Nav1.8. Interacts with NFASC. Interacts with TMEM65.

It localises to the cell membrane. The protein resides in the perikaryon. The protein localises to the cell projection. It is found in the axon. In terms of biological role, regulatory subunit of multiple voltage-gated sodium (Nav) channels directly mediating the depolarization of excitable membranes. Navs, also called VGSCs (voltage-gated sodium channels) or VDSCs (voltage-dependent sodium channels), operate by switching between closed and open conformations depending on the voltage difference across the membrane. In the open conformation they allow Na(+) ions to selectively pass through the pore, along their electrochemical gradient. The influx of Na+ ions provokes membrane depolarization, initiating the propagation of electrical signals throughout cells and tissues. The accessory beta subunits participate in localization and functional modulation of the Nav channels. Modulates the activity of SCN1A/Nav1.1, SCN2A/Nav1.2, SCN3A/Nav1.3, SCN4A/Nav1.4, SCN5A/Nav1.5, SCN8A/Nav1.6, SCN9A/Nav1.7 and SCN10A/Nav1.8. The chain is Sodium channel regulatory subunit beta-1 from Bos taurus (Bovine).